We begin with the raw amino-acid sequence, 567 residues long: Glutathione/L-cysteine transport system ATP-binding/permease protein CydC (567 aa).

The next 6 membrane-spanning stretches (helical) occupy residues 14-34, 44-64, 130-150, 156-176, 240-260, and 266-286; these read ILTL…MQAE, FNGK…IAFI, FLPK…YVFF, AIIL…LGLV, SFAL…FLGL, and DILL…FLPV. An ABC transmembrane type-1 domain is found at 17 to 298; sequence LITCLTLIQT…VGNDYHATLN (282 aa). One can recognise an ABC transporter domain in the interval 321-561; that stretch reads LQLEAWSDQD…NGVYTKLVKA (241 aa). 360–367 lines the ATP pocket; it reads GASGAGKS.

Belongs to the ABC transporter superfamily. Cysteine exporter (TC 3.A.1.129.1) family. Forms a heterodimer with CydD.

It localises to the cell membrane. It catalyses the reaction L-cysteine(in) + ATP + H2O = L-cysteine(out) + ADP + phosphate + H(+). It carries out the reaction glutathione(in) + ATP + H2O = glutathione(out) + ADP + phosphate + H(+). Functionally, part of the ABC transporter complex CydDC that exports the reduced low-molecular-weight thiols cysteine and glutathione from the cell. Export of these thiol-containing redox-active molecules may be crucial for redox homeostasis, permitting correct assembly of various respiratory complexes and formation of correct disulfide bonds in secreted proteins. CydC contains transmembrane domains (TMD), which form a pore in the membrane, and an ATP-binding domain (NBD), which is responsible for energy generation. The chain is Glutathione/L-cysteine transport system ATP-binding/permease protein CydC (cydC) from Bacillus subtilis (strain 168).